The sequence spans 209 residues: MGQKVHPKGFRLGLTSEWDAQWFNEKKYSEYLLEDEAIRNFIKKNYNQAGIARVFVQRPDAERVLVSIYAARPGILIGKKGAGITELRQALEANFNRKFGIDIIELKTPETEASLVAESIAQKIEKRASYKIVMKRAITAALRRGARGIKIMVSGRLAGAEIARTEWYLKGRLPLQTLRSVIDYSTARAETKYGTIGIKVWIYKGDQNI.

The KH type-2 domain occupies 38–107 (IRNFIKKNYN…KFGIDIIELK (70 aa)).

It belongs to the universal ribosomal protein uS3 family. In terms of assembly, part of the 30S ribosomal subunit. Forms a tight complex with proteins S10 and S14.

Its function is as follows. Binds the lower part of the 30S subunit head. Binds mRNA in the 70S ribosome, positioning it for translation. In Fervidobacterium nodosum (strain ATCC 35602 / DSM 5306 / Rt17-B1), this protein is Small ribosomal subunit protein uS3.